The sequence spans 86 residues: Large ribosomal subunit protein bL27 (86 aa).

The segment at M1–G22 is disordered.

It belongs to the bacterial ribosomal protein bL27 family.

This is Large ribosomal subunit protein bL27 from Rickettsia bellii (strain RML369-C).